Consider the following 176-residue polypeptide: uncharacterized protein (176 aa).

This is an uncharacterized protein from Dictyostelium discoideum (Social amoeba).